The chain runs to 266 residues: Signal peptidase I (266 aa).

Residues 1-20 (MQTDNTKSNTNKTAKQEWGS) are Cytoplasmic-facing. The chain crosses the membrane as a helical span at residues 21–41 (FAFVICIALLIRILIMEPFTV). Over 42-266 (PTGSMKATIL…IFRNLYNTDA (225 aa)) the chain is Periplasmic. Residues Ser45 and Lys108 contribute to the active site.

This sequence belongs to the peptidase S26 family.

It localises to the cell inner membrane. The catalysed reaction is Cleavage of hydrophobic, N-terminal signal or leader sequences from secreted and periplasmic proteins.. Functionally, complements E.coli mutants temperature-sensitive for LepB function. This chain is Signal peptidase I (lepB), found in Rickettsia rickettsii (strain Sheila Smith).